The chain runs to 130 residues: 3-aminoacrylate deaminase RutC (130 aa).

Belongs to the RutC family.

It carries out the reaction (Z)-3-aminoacrylate + H2O + H(+) = 3-oxopropanoate + NH4(+). Involved in pyrimidine catabolism. Catalyzes the deamination of 3-aminoacrylate to malonic semialdehyde, a reaction that can also occur spontaneously. RutC may facilitate the reaction and modulate the metabolic fitness, rather than catalyzing essential functions. The sequence is that of 3-aminoacrylate deaminase RutC from Variovorax paradoxus (strain S110).